Reading from the N-terminus, the 418-residue chain is Glutamyl-tRNA reductase (418 aa).

Substrate contacts are provided by residues T49–R52, S108, E113–Q115, and Q119. The active-site Nucleophile is C50. G188 to I193 provides a ligand contact to NADP(+).

It belongs to the glutamyl-tRNA reductase family. As to quaternary structure, homodimer.

The enzyme catalyses (S)-4-amino-5-oxopentanoate + tRNA(Glu) + NADP(+) = L-glutamyl-tRNA(Glu) + NADPH + H(+). The protein operates within porphyrin-containing compound metabolism; protoporphyrin-IX biosynthesis; 5-aminolevulinate from L-glutamyl-tRNA(Glu): step 1/2. Functionally, catalyzes the NADPH-dependent reduction of glutamyl-tRNA(Glu) to glutamate 1-semialdehyde (GSA). This is Glutamyl-tRNA reductase from Aliivibrio salmonicida (strain LFI1238) (Vibrio salmonicida (strain LFI1238)).